Here is a 367-residue protein sequence, read N- to C-terminus: Phospho-N-acetylmuramoyl-pentapeptide-transferase (367 aa).

The next 10 membrane-spanning stretches (helical) occupy residues 34–54 (GAVVTGALFVFLFGPWIIDHL), 78–98 (TPTMGGLMILSGLTVGTVLWA), 101–121 (LNPYVWIVLAVTLGFGFVGFY), 135–155 (FGSKLRLLIEAAIALVACYAL), 175–195 (TVLHFGWFFVVFGAFVIVGAG), 206–226 (GLAIVPVMIATASFAMIAYLA), 246–266 (LAVLCGALLGAGLGFLWFNAP), 270–290 (IFMGDTGSLALGGMLGAIAVA), 295–315 (IVLAVIGGLFVLEAVSVIVQV), and 344–364 (QIVIRFWIISVMLALAGLSTL).

The protein belongs to the glycosyltransferase 4 family. MraY subfamily. It depends on Mg(2+) as a cofactor.

Its subcellular location is the cell inner membrane. It catalyses the reaction UDP-N-acetyl-alpha-D-muramoyl-L-alanyl-gamma-D-glutamyl-meso-2,6-diaminopimeloyl-D-alanyl-D-alanine + di-trans,octa-cis-undecaprenyl phosphate = di-trans,octa-cis-undecaprenyl diphospho-N-acetyl-alpha-D-muramoyl-L-alanyl-D-glutamyl-meso-2,6-diaminopimeloyl-D-alanyl-D-alanine + UMP. It participates in cell wall biogenesis; peptidoglycan biosynthesis. Its function is as follows. Catalyzes the initial step of the lipid cycle reactions in the biosynthesis of the cell wall peptidoglycan: transfers peptidoglycan precursor phospho-MurNAc-pentapeptide from UDP-MurNAc-pentapeptide onto the lipid carrier undecaprenyl phosphate, yielding undecaprenyl-pyrophosphoryl-MurNAc-pentapeptide, known as lipid I. The polypeptide is Phospho-N-acetylmuramoyl-pentapeptide-transferase (Bradyrhizobium diazoefficiens (strain JCM 10833 / BCRC 13528 / IAM 13628 / NBRC 14792 / USDA 110)).